The following is a 214-amino-acid chain: External core antigen (214 aa).

The first 19 residues, 1–19 (MQLFHLCLIISCTCPTVQA), serve as a signal peptide directing secretion. Residues 25–27 (GWL) are HBEAG. The disordered stretch occupies residues 165-214 (NAPILSTLPETTVVRRRDRGRSPRRRTPSPRRRRSPSPRRRRSQSRESQC). A compositionally biased stretch (basic residues) spans 178-207 (VRRRDRGRSPRRRTPSPRRRRSPSPRRRRS). One copy of the 1; half-length repeat lies at 186–192 (SPRRRTP). The segment at 186-208 (SPRRRTPSPRRRRSPSPRRRRSQ) is 3 X 8 AA repeats of S-P-R-R-R-R-S-[PQ]. A propeptide spanning residues 186–214 (SPRRRTPSPRRRRSPSPRRRRSQSRESQC) is cleaved from the precursor. A run of 2 repeats spans residues 193-200 (SPRRRRSP) and 201-208 (SPRRRRSQ).

The protein belongs to the orthohepadnavirus precore antigen family. As to quaternary structure, homodimerizes. Post-translationally, phosphorylated. In terms of processing, cleaved by host furin.

The protein resides in the secreted. It is found in the host nucleus. Its function is as follows. May regulate immune response to the intracellular capsid in acting as a T-cell tolerogen, by having an immunoregulatory effect which prevents destruction of infected cells by cytotoxic T-cells. This immune regulation may predispose to chronicity during perinatal infections and prevent severe liver injury during adult infections. This chain is External core antigen, found in Hepatitis B virus genotype A2 subtype adw2 (strain Rutter 1979) (HBV-A).